A 2792-amino-acid chain; its full sequence is MTSIHFVVHPLPGTEDQLNDRLREVSEKLNKYNLNSHPPLNVLEQATIKQCVVGPNHAAFLLEDGRICRIGFSVQPDRLELGKPDNNDGSKLNSSSGTGRTSRPGRTSDSPWFLSGSETLGRLAGNTLGSRWSSGVGGSGGGSSGRSSAGARDSRRQTRVIRTGRDRGSGLLGSQPQPVIPASVIPEELISQAQVVLQGKSRSVIIRELQRTNLDVNLAVNNLLSRDDEDGDDGDDTASESYLPGEDLMSLLDADIHSAHPSVIIDADAMFSEDISYFGYPSFRRSSLSRLGSSRERDSELLRERESVLRLRERRWLDGASFDNERGSTSKEGESNPDKKNTPVQSPVSLGEDLQWWPDKDGTKFTCIGALYSELLAVSSKGELYQWKWSESEPYRNAQNPSLHHPRATFLGLTNEKIVLLSANSIRATVATENNKVATWVDETLSSVASKLEHTAQTYSELQGERIVSLHCCALYTCAQLENNLYWWGVVPFSQRKKMLEKARAKNKKPKSSAGISSMPNITVGTQVCLRNNPLYHAGAVAFSISAGIPKVGVLMESVWNMNDSCRFQLRSPESLKSMEKASKTLETKPESKQEPVKTEMGPPPSPASTCSDASSIASSASMPYKRRRSTPAPREEEKVNEEQWPLREVVFVEDVKNVPVGKVLKVDGAYVAVKFPGTSTNTTCQNSSGPDADPSSLLQDCRLLRIDELQVVKTGGTPKVPDCFQRTPKKLCIPEKTEILAVNVDSKGVHAVLKTGSWVRYCVFDLATGKAEQENNFPTSSVAFLGQDERSVAIFTAGQESPIVLRDGNGTIYPMAKDCMGGIRDPDWLDLPPISSLGMGVHSLINLPANSTIKKKAAIIIMAVEKQTLMQHILRCDYEACRQYLVNLEQAVVLEQNRQMLQTFISHRCDGNRNILHACVSVCFPTSNKETKEEEEAERSERNTFAERLSAVEAIANAISVVSSNGPGNRAGSSNSRSLRLREMMRRSLRAAGLGRHEAGASSSDHQDPVSPPIAPPSWVPDPPSMDPDGDIDFILAPAVGSLTTAATGSGQGPSTSTIPGPSTEPSVVESKDRKANAHFILKLLCDSAVLQPYLRELLSAKDARGMTPFMSAVSGRAYSAAITILETAQKIAKAEVSASEKEEDVFMGMVCPSGTNPDDSPLYVLCCNDTCSFTWTGAEHINQDIFECRTCGLLESLCCCTECARVCHKGHDCKLKRTSPTAYCDCWEKCKCKTLIAGQKSARLDLLYRLLTATNLVTLPNSRGEHLLLFLVQTVARQTVEHCQYRPPRIREDRNRKTASPEDSDMPDHDLEPPRFAQLALERVLQDWNALRSMIMFGSQENKDPLSASSRIGHLLPEEQVYLNQQSGTIRLDCFTHCLIVKCTADILLLDTLLGTLVKELQNKYTPGRREEAIAVTMRFLRSVARVFVILSVEMASSKKKNNFIPQPIGKCKRVFQALLPYAVEELCNVAESLIVPVRMGIARPTAPFTLASTSIDAMQGSEELFSVEPLPPRPSSDQASSSSQSQSSYIIRNPQQRRISQSQPVRGRDEEQDDIVSADVEEVEVVEGVAGEEDHHDEQEEHGEENAEAEGHHDEHDEDGSDMELDLLAAAETESDSESNHSNQDNASGRRSVVTAATAGSEAGASSVPAFFSEDDSQSNDSSDSDSSSSQSDDIEQETFMLDEPLERTTNSSHANGAAQAPRSMQWAVRNPQHQRAASTAPSSTSTPAASSAGLIYIDPSNLRRSGTISTSAAAAAAALEASNASSYLTSASSLARAYSIVIRQISDLMGLIPKYNHLVYSQIPAAVKLTYQDAVNLQNYVEEKLIPTWNWMVSVMDSTEAQLRYGSALASAGDPGHPNHPLHASQNSARRERMTAREEASLRTLEGRRRATLLSARQGMMSARGDFLNYALSLMRSHNDEHSDVLPVLDVCSLKHVAYVFQALIYWIKAMNQQTTLDTPQLERKRTRELLELGIDNEDSEHENDDDTSQSATLNDKDDDSLPAETGQNHPFFRRSDSMTFLGCIPPNPFEVPLAEAIPLADQPHLLQPNARKEDLFGRPSQGLYSSSAGSGKCIVEVTMDRNCLEVLPTKMSYAANLKNVMNMQNRQKKEGEEQSLLAEEADSSKPGPSAPDVAAQLKSSLLAEIGLTESEGPPLTSFRPQCSFMGMVISHDMLLGRWRLSLELFGRVFMEDVGAEPGSILTELGGFEVKESKFRREMEKLRNQQSRDLSLEVDRDRDLLIQQTMRQLNNHFGRRCATTPMAVHRVKVTFKDEPGEGSGVARSFYTAIAQAFLSNEKLPNLDCIQNANKGTHTSLMQRLRNRGERDREREREREMRRSSGLRAGSRRDRDRDFRRQLSIDTRPFRPASEGNPSDDPDPLPAHRQALGERLYPRVQAMQPAFASKITGMLLELSPAQLLLLLASEDSLRARVDEAMELIIAHGRENGADSILDLGLLDSSEKVQENRKRHGSSRSVVDMDLEDTDDGDDNAPLFYQPGKRGFYTPRPGKNTEARLNCFRNIGRILGLCLLQNELCPITLNRHVIKVLLGRKVNWHDFAFFDPVMYESLRQLILASQSSDADAVFSAMDLAFAIDLCKEEGGGQVELIPNGVNIPVTPQNVYEYVRKYAEHRMLVVAEQPLHAMRKGLLDVLPKNSLEDLTAEDFRLLVNGCGEVNVQMLISFTSFNDESGENAEKLLQFKRWFWSIVEKMSMTERQDLVYFWTSSPSLPASEEGFQPMPSITIRPPDDQHLPTANTCISRLYVPLYSSKQILKQKLLLAIKTKNFGFV.

Position 2 is an N-acetylthreonine (threonine 2). The segment covering 77–88 (DRLELGKPDNND) has biased composition (basic and acidic residues). The segment at 77–175 (DRLELGKPDN…DRGSGLLGSQ (99 aa)) is disordered. Over residues 94–111 (SSSGTGRTSRPGRTSDSP) the composition is skewed to low complexity. Phosphoserine is present on serine 110. Over residues 135-144 (GVGGSGGGSS) the composition is skewed to gly residues. A UBA domain is found at 184 to 226 (VIPEELISQAQVVLQGKSRSVIIRELQRTNLDVNLAVNNLLSR). A Phosphoserine modification is found at serine 321. The segment covering 322 to 341 (FDNERGSTSKEGESNPDKKN) has biased composition (basic and acidic residues). Residues 322–347 (FDNERGSTSKEGESNPDKKNTPVQSP) form a disordered region. Residues serine 346 and serine 572 each carry the phosphoserine modification. The segment covering 577-598 (KSMEKASKTLETKPESKQEPVK) has biased composition (basic and acidic residues). The interval 577 to 642 (KSMEKASKTL…APREEEKVNE (66 aa)) is disordered. Serine 606 is subject to Phosphoserine. Over residues 608–622 (ASTCSDASSIASSAS) the composition is skewed to low complexity. Threonine 631 carries the phosphothreonine modification. Residues serine 802, serine 922, and serine 1012 each carry the phosphoserine modification. Disordered stretches follow at residues 993-1029 (AGLGRHEAGASSSDHQDPVSPPIAPPSWVPDPPSMDP) and 1046-1069 (TAATGSGQGPSTSTIPGPSTEPSV). Residues 1011–1027 (VSPPIAPPSWVPDPPSM) are compositionally biased toward pro residues. A compositionally biased stretch (polar residues) spans 1046-1067 (TAATGSGQGPSTSTIPGPSTEP). 2 positions are modified to phosphothreonine: threonine 1109 and threonine 1129. Residues 1171-1239 (DTCSFTWTGA…EKCKCKTLIA (69 aa)) form a UBR-type zinc finger. Phosphoserine is present on residues serine 1221, serine 1302, serine 1349, serine 1369, and serine 1475. The segment at 1293-1312 (REDRNRKTASPEDSDMPDHD) is disordered. The disordered stretch occupies residues 1509 to 1734 (SVEPLPPRPS…PSSTSTPAAS (226 aa)). Low complexity predominate over residues 1518 to 1531 (SSDQASSSSQSQSS). A compositionally biased stretch (polar residues) spans 1532–1547 (YIIRNPQQRRISQSQP). Serine 1543 is subject to Phosphoserine. 2 stretches are compositionally biased toward acidic residues: residues 1553–1568 (EEQDDIVSADVEEVEV) and 1599–1608 (HDEDGSDMEL). Polar residues predominate over residues 1623-1632 (NHSNQDNASG). Composition is skewed to low complexity over residues 1635–1651 (SVVTAATAGSEAGASSV), 1662–1675 (SNDSSDSDSSSSQS), and 1720–1734 (AASTAPSSTSTPAAS). The residue at position 1730 (threonine 1730) is a Phosphothreonine. Serine 1735 carries the phosphoserine modification. A Phosphotyrosine modification is found at tyrosine 1740. Serine 1774 is modified (phosphoserine). The segment at 1853–1884 (LASAGDPGHPNHPLHASQNSARRERMTAREEA) is disordered. Residues 1873-1884 (ARRERMTAREEA) are compositionally biased toward basic and acidic residues. Residue threonine 1963 is modified to Phosphothreonine. Residues 1978-2015 (GIDNEDSEHENDDDTSQSATLNDKDDDSLPAETGQNHP) form a disordered region. The segment covering 1979–1992 (IDNEDSEHENDDDT) has biased composition (acidic residues). Phosphoserine is present on residues serine 1984, serine 2020, and serine 2022. At threonine 2024 the chain carries Phosphothreonine. Phosphoserine is present on serine 2070. The interval 2111–2137 (RQKKEGEEQSLLAEEADSSKPGPSAPD) is disordered. Phosphothreonine is present on threonine 2207. Phosphoserine occurs at positions 2235 and 2283. The segment at 2317 to 2387 (HTSLMQRLRN…SDDPDPLPAH (71 aa)) is disordered. Composition is skewed to basic and acidic residues over residues 2326-2342 (NRGERDREREREREMRR) and 2350-2362 (SRRDRDRDFRRQL). A PABC domain is found at 2371–2448 (PASEGNPSDD…AMELIIAHGR (78 aa)). In terms of domain architecture, HECT spans 2455-2792 (ILDLGLLDSS…AIKTKNFGFV (338 aa)). Serine 2463, serine 2477, and serine 2479 each carry phosphoserine. Positions 2467-2494 (VQENRKRHGSSRSVVDMDLEDTDDGDDN) are disordered. Residues 2483–2493 (MDLEDTDDGDD) show a composition bias toward acidic residues. The Glycyl thioester intermediate role is filled by cysteine 2761.

The protein belongs to the UBR5 family. In terms of assembly, homotetramer; composed of a dimer of dimers. Associates with CDK9 and TFIIS/TCEA1 and forms a transcription regulatory complex made of CDK9, RNAP II, UBR5 and TFIIS/TCEA1 that can stimulate target gene transcription (e.g. gamma fibrinogen/FGG) by recruiting their promoters. Associates with the E3 ligase complex containing DYRK2, EDD/UBR5, DDB1 and DCAF1 proteins (EDVP complex). Binds TOPBP1. Interacts with PIH1D1. Interacts with CIB1.

Its subcellular location is the nucleus. The protein resides in the cytoplasm. The enzyme catalyses S-ubiquitinyl-[E2 ubiquitin-conjugating enzyme]-L-cysteine + [acceptor protein]-L-lysine = [E2 ubiquitin-conjugating enzyme]-L-cysteine + N(6)-ubiquitinyl-[acceptor protein]-L-lysine.. The protein operates within protein modification; protein ubiquitination. In terms of biological role, E3 ubiquitin-protein ligase involved in different protein quality control pathways in the cytoplasm and nucleus. Mainly acts as a ubiquitin chain elongator that extends pre-ubiquitinated substrates. Component of the N-end rule pathway: ubiquitinates proteins bearing specific N-terminal residues that are destabilizing according to the N-end rule, leading to their degradation. Recognizes type-1 N-degrons, containing positively charged amino acids (Arg, Lys and His). Together with UBR4, part of a cytoplasm protein quality control pathway that prevents protein aggregation by catalyzing assembly of heterotypic 'Lys-11'-/'Lys-48'-linked branched ubiquitin chains on aggregated proteins, leading to substrate recognition by the segregase p97/VCP and degradation by the proteasome: UBR5 is probably branching multiple 'Lys-48'-linked chains of substrates initially modified with mixed conjugates by UBR4. Together with ITCH, catalyzes 'Lys-48'-/'Lys-63'-branched ubiquitination of TXNIP, leading to its degradation: UBR5 mediates branching of 'Lys-48'-linked chains of substrates initially modified with 'Lys-63'-linked conjugates by ITCH. Catalytic component of a nuclear protein quality control pathway that mediates ubiquitination and degradation of unpaired transcription factors (i.e. transcription factors that are not assembled into functional multiprotein complexes): specifically recognizes and binds degrons that are not accessible when transcription regulators are associated with their coactivators. Ubiquitinates various unpaired transcription regulator (MYC, SUPT4H1, SUPT5H, CDC20 and MCRS1), as well as ligand-bound nuclear receptors (ESR1, NR1H3, NR3C1, PGR, RARA, RXRA AND VDR) that are not associated with their nuclear receptor coactivators (NCOAs). Involved in maturation and/or transcriptional regulation of mRNA by mediating polyubiquitination and activation of CDK9. Also acts as a regulator of DNA damage response by acting as a suppressor of RNF168, an E3 ubiquitin-protein ligase that promotes accumulation of 'Lys-63'-linked histone H2A and H2AX at DNA damage sites, thereby acting as a guard against excessive spreading of ubiquitinated chromatin at damaged chromosomes. Regulates DNA topoisomerase II binding protein (TopBP1) in the DNA damage response. Ubiquitinates acetylated PCK1. Acts as a positive regulator of the canonical Wnt signaling pathway by mediating (1) ubiquitination and stabilization of CTNNB1, and (2) 'Lys-48'-linked ubiquitination and degradation of TLE3. Promotes disassembly of the mitotic checkpoint complex (MCC) from the APC/C complex by catalyzing ubiquitination of BUB1B, BUB3 and CDC20. Plays an essential role in extraembryonic development. Required for the maintenance of skeletal tissue homeostasis by acting as an inhibitor of hedgehog (HH) signaling. This chain is E3 ubiquitin-protein ligase UBR5, found in Mus musculus (Mouse).